The sequence spans 276 residues: uncharacterized protein (276 aa).

The disordered stretch occupies residues 1–70 (MSKAKSPIKS…SDDDEEDSPN (70 aa)). The segment covering 21–35 (VLREKKVKDAEKAEH) has biased composition (basic and acidic residues). The RRM domain maps to 105–183 (GVLYVGRLPH…KLLQCKVIPE (79 aa)). The tract at residues 249–276 (VSHPKAASPVASKKSSKKKNKKVLAAHK) is disordered. Residues 252 to 261 (PKAASPVASK) show a composition bias toward low complexity. Basic residues predominate over residues 262 to 276 (KSSKKKNKKVLAAHK).

The protein resides in the nucleus. Its subcellular location is the nucleolus. This is an uncharacterized protein from Schizosaccharomyces pombe (strain 972 / ATCC 24843) (Fission yeast).